The sequence spans 480 residues: Uridine/deoxyuridine transporter (480 aa).

14 helical membrane passes run 14 to 34, 55 to 75, 93 to 113, 115 to 135, 147 to 167, 174 to 194, 207 to 227, 239 to 259, 280 to 300, 320 to 340, 358 to 378, 382 to 402, 417 to 437, and 449 to 469; these read VGSI…FQLN, SIAL…LFLP, LTMI…LMIG, ILQG…HVKV, ILTS…GWLV, SVFF…SFGT, WTGV…VNAL, WLLA…FWQV, GLLI…NGII, LVTL…SGFL, IIGI…LLLL, FIGI…GIVL, GMFN…PTVL, and ISGI…SFLI.

It belongs to the major facilitator superfamily. EmrB family.

It is found in the cell membrane. Responsible for the uptake of uridine and deoxyuridine. Not involved in purine nucleoside uptake. The sequence is that of Uridine/deoxyuridine transporter from Lactococcus lactis subsp. cremoris (strain MG1363).